The chain runs to 61 residues: UPF0434 protein Sama_1339 (61 aa).

Belongs to the UPF0434 family.

The protein is UPF0434 protein Sama_1339 of Shewanella amazonensis (strain ATCC BAA-1098 / SB2B).